A 310-amino-acid chain; its full sequence is MKHLHIIDSHTGGEPTRVVVSGFPPLGDGPMAERLAALARDHDRYRTACILEPRGSDVLVGALLCEPVSAGAAAGVIFFNNAGYLGMCGHGTIGLVRTLHHMGRIAPGVHRIETPVGDVEATLHDDLSVSVRNVLAYRHAKDVVVEVPGHGSVTGDVAWGGNWFFLVSDHGQRIAGENVAALAAYASAVRAGLERAGVTGRDGAPIDHIELFADDPEHDSRSFVLCPGHAYDRSPCGTGTSAKLACLAADGKLAPGAAWRQASVIGSVFSASYERAESGVVPTIRGSAHLSAEATLLIEDDDPFGWGIVS.

C88 serves as the catalytic Proton acceptor. Substrate-binding positions include 89 to 90, H208, and D232; that span reads GH. The Proton donor role is filled by C236. Substrate is bound at residue 237–238; that stretch reads GT.

It belongs to the proline racemase family.

The enzyme catalyses trans-4-hydroxy-L-proline = cis-4-hydroxy-D-proline. Functionally, catalyzes the epimerization of trans-4-hydroxy-L-proline (t4LHyp) to cis-4-hydroxy-D-proline (c4DHyp). Is likely involved in a degradation pathway that converts t4LHyp to alpha-ketoglutarate. Can also catalyze the dehydration of trans-3-hydroxy-L-proline (t3LHyp) to Delta(1)-pyrroline-2-carboxylate (Pyr2C), albeit with 42-fold lower efficiency. Displays no proline racemase activity. This is 4-hydroxyproline 2-epimerase from Burkholderia thailandensis (strain ATCC 700388 / DSM 13276 / CCUG 48851 / CIP 106301 / E264).